A 216-amino-acid polypeptide reads, in one-letter code: 3-isopropylmalate dehydratase small subunit 1 (216 aa).

This sequence belongs to the LeuD family. LeuD type 1 subfamily. In terms of assembly, heterodimer of LeuC and LeuD.

The enzyme catalyses (2R,3S)-3-isopropylmalate = (2S)-2-isopropylmalate. Its pathway is amino-acid biosynthesis; L-leucine biosynthesis; L-leucine from 3-methyl-2-oxobutanoate: step 2/4. In terms of biological role, catalyzes the isomerization between 2-isopropylmalate and 3-isopropylmalate, via the formation of 2-isopropylmaleate. This is 3-isopropylmalate dehydratase small subunit 1 from Bordetella bronchiseptica (strain ATCC BAA-588 / NCTC 13252 / RB50) (Alcaligenes bronchisepticus).